We begin with the raw amino-acid sequence, 190 residues long: Elongation factor P (190 aa).

Position 34 is an N6-(3,6-diaminohexanoyl)-5-hydroxylysine (Lys34).

Belongs to the elongation factor P family. Post-translationally, may be beta-lysylated on the epsilon-amino group of Lys-34 by the combined action of EpmA and EpmB, and then hydroxylated on the C5 position of the same residue by EpmC (if this protein is present). Lysylation is critical for the stimulatory effect of EF-P on peptide-bond formation. The lysylation moiety may extend toward the peptidyltransferase center and stabilize the terminal 3-CCA end of the tRNA. Hydroxylation of the C5 position on Lys-34 may allow additional potential stabilizing hydrogen-bond interactions with the P-tRNA.

The protein localises to the cytoplasm. Its pathway is protein biosynthesis; polypeptide chain elongation. Functionally, involved in peptide bond synthesis. Alleviates ribosome stalling that occurs when 3 or more consecutive Pro residues or the sequence PPG is present in a protein, possibly by augmenting the peptidyl transferase activity of the ribosome. Modification of Lys-34 is required for alleviation. The protein is Elongation factor P of Psychrobacter arcticus (strain DSM 17307 / VKM B-2377 / 273-4).